Consider the following 109-residue polypeptide: Protein reprimo (109 aa).

Asn-7 and Asn-18 each carry an N-linked (GlcNAc...) asparagine glycan. Residues 56–76 form a helical membrane-spanning segment; it reads VVQIAVMCVLSLTVVFGIFFL. Ser-98 carries the post-translational modification Phosphoserine.

This sequence belongs to the reprimo family.

Its subcellular location is the cytoplasm. The protein resides in the membrane. Its function is as follows. May be involved in the regulation of p53-dependent G2 arrest of the cell cycle. Seems to induce cell cycle arrest by inhibiting CDK1 activity and nuclear translocation of the CDC2 cyclin B1 complex. This Homo sapiens (Human) protein is Protein reprimo (RPRM).